Consider the following 112-residue polypeptide: Nucleoid-associated protein CV_1611 (112 aa).

Belongs to the YbaB/EbfC family. As to quaternary structure, homodimer.

The protein resides in the cytoplasm. It localises to the nucleoid. In terms of biological role, binds to DNA and alters its conformation. May be involved in regulation of gene expression, nucleoid organization and DNA protection. The protein is Nucleoid-associated protein CV_1611 of Chromobacterium violaceum (strain ATCC 12472 / DSM 30191 / JCM 1249 / CCUG 213 / NBRC 12614 / NCIMB 9131 / NCTC 9757 / MK).